The chain runs to 389 residues: Tryptophan synthase beta chain 1 (389 aa).

N6-(pyridoxal phosphate)lysine is present on K84.

The protein belongs to the TrpB family. As to quaternary structure, tetramer of two alpha and two beta chains. The cofactor is pyridoxal 5'-phosphate.

It is found in the plastid. It localises to the chloroplast. The catalysed reaction is (1S,2R)-1-C-(indol-3-yl)glycerol 3-phosphate + L-serine = D-glyceraldehyde 3-phosphate + L-tryptophan + H2O. The protein operates within amino-acid biosynthesis; L-tryptophan biosynthesis; L-tryptophan from chorismate: step 5/5. Functionally, the beta subunit is responsible for the synthesis of L-tryptophan from indole and L-serine. The chain is Tryptophan synthase beta chain 1 (TSB1) from Zea mays (Maize).